We begin with the raw amino-acid sequence, 503 residues long: ATP synthase subunit alpha (503 aa).

170–177 (GDRQTGKT) is an ATP binding site.

Belongs to the ATPase alpha/beta chains family. F-type ATPases have 2 components, CF(1) - the catalytic core - and CF(0) - the membrane proton channel. CF(1) has five subunits: alpha(3), beta(3), gamma(1), delta(1), epsilon(1). CF(0) has three main subunits: a(1), b(2) and c(9-12). The alpha and beta chains form an alternating ring which encloses part of the gamma chain. CF(1) is attached to CF(0) by a central stalk formed by the gamma and epsilon chains, while a peripheral stalk is formed by the delta and b chains.

It localises to the cell membrane. The enzyme catalyses ATP + H2O + 4 H(+)(in) = ADP + phosphate + 5 H(+)(out). Produces ATP from ADP in the presence of a proton gradient across the membrane. The alpha chain is a regulatory subunit. The sequence is that of ATP synthase subunit alpha from Brevibacillus brevis (strain 47 / JCM 6285 / NBRC 100599).